A 593-amino-acid chain; its full sequence is Aspartate--tRNA ligase (593 aa).

E180 is an L-aspartate binding site. An aspartate region spans residues 204-207; it reads QIFK. R226 provides a ligand contact to L-aspartate. ATP-binding positions include 226 to 228 and Q235; that span reads RDE. Residue H453 coordinates L-aspartate. E487 serves as a coordination point for ATP. R494 is a binding site for L-aspartate. 539-542 is a binding site for ATP; sequence GLDR.

Belongs to the class-II aminoacyl-tRNA synthetase family. Type 1 subfamily. Homodimer.

It is found in the cytoplasm. It carries out the reaction tRNA(Asp) + L-aspartate + ATP = L-aspartyl-tRNA(Asp) + AMP + diphosphate. In terms of biological role, catalyzes the attachment of L-aspartate to tRNA(Asp) in a two-step reaction: L-aspartate is first activated by ATP to form Asp-AMP and then transferred to the acceptor end of tRNA(Asp). The chain is Aspartate--tRNA ligase from Clostridium botulinum (strain Kyoto / Type A2).